We begin with the raw amino-acid sequence, 594 residues long: Probable translation initiation factor IF-2 (594 aa).

One can recognise a tr-type G domain in the interval 3 to 220 (IRSPIVSVLG…MLMGLAQQYL (218 aa)). The interval 12–19 (GHVDHGKT) is G1. 12–19 (GHVDHGKT) serves as a coordination point for GTP. The interval 37–41 (GITQH) is G2. The tract at residues 76-79 (DTPG) is G3. Residues 76 to 80 (DTPGH) and 130 to 133 (NKID) each bind GTP. A G4 region spans residues 130-133 (NKID). The segment at 198 to 200 (SAI) is G5.

It belongs to the TRAFAC class translation factor GTPase superfamily. Classic translation factor GTPase family. IF-2 subfamily.

Its function is as follows. Function in general translation initiation by promoting the binding of the formylmethionine-tRNA to ribosomes. Seems to function along with eIF-2. This Methanothermobacter thermautotrophicus (strain ATCC 29096 / DSM 1053 / JCM 10044 / NBRC 100330 / Delta H) (Methanobacterium thermoautotrophicum) protein is Probable translation initiation factor IF-2 (infB).